We begin with the raw amino-acid sequence, 211 residues long: tRNA (guanine-N(7)-)-methyltransferase (211 aa).

S-adenosyl-L-methionine-binding residues include Glu43, Asp68, Asn95, and Asn117. Lys121 is a substrate binding site. Residues 123 to 128 (RHNKRR) form an interaction with RNA region. Residues Asp153 and 190–193 (TEYE) each bind substrate.

The protein belongs to the class I-like SAM-binding methyltransferase superfamily. TrmB family.

It catalyses the reaction guanosine(46) in tRNA + S-adenosyl-L-methionine = N(7)-methylguanosine(46) in tRNA + S-adenosyl-L-homocysteine. It participates in tRNA modification; N(7)-methylguanine-tRNA biosynthesis. Its function is as follows. Catalyzes the formation of N(7)-methylguanine at position 46 (m7G46) in tRNA. In Clostridium tetani (strain Massachusetts / E88), this protein is tRNA (guanine-N(7)-)-methyltransferase.